We begin with the raw amino-acid sequence, 63 residues long: Large ribosomal subunit protein bL35 (63 aa).

The disordered stretch occupies residues Met-1–Lys-22.

The protein belongs to the bacterial ribosomal protein bL35 family.

This is Large ribosomal subunit protein bL35 from Marinobacter nauticus (strain ATCC 700491 / DSM 11845 / VT8) (Marinobacter aquaeolei).